A 205-amino-acid chain; its full sequence is MSVDPMTYEAQFFGFTPQTCMLRIYIAFQDYLFEVMQAVEQVILKKLDGIPDCDISPVQIRKCTEKFLCFMKGHFDNLFSKMEQLFLQLILRIPSNILLPEDKCKETPYSEEDFQHLQKEIEQLQEKYKTELCTKQALLAELEEQKIVQAKLKQTLTFFDELHNVGRDHGTSDFRESLVSLVQNSRKLQNIRDNVEKESKRLKIS.

Residues 108-205 are a coiled coil; it reads PYSEEDFQHL…EKESKRLKIS (98 aa).

It belongs to the mis12 family. In terms of assembly, component of the MIS12 complex composed of MIS12, DSN1, NSL1 and PMF1. Also interacts with KNL1, CBX3, CBX5, NDC80 and ZWINT.

The protein localises to the chromosome. The protein resides in the centromere. It is found in the kinetochore. Functionally, part of the MIS12 complex which is required for normal chromosome alignment and segregation and for kinetochore formation during mitosis. Essential for proper kinetochore microtubule attachments. The protein is Protein MIS12 homolog of Homo sapiens (Human).